Consider the following 352-residue polypeptide: MNTLLMHCRPGFEGEVCAEIAEHAATLEIPGYAKSKPASAHVEFVCQDADGAERLMRRLRFADLIFPRQWARGPGFIELPESQRIEVLLAELASYPVCGSLWLEVLDTNAGKEVSTFCRKFEKPLRAALVKAGRLQEDPALPRLLLTFRSGREVFVGLAEPRNSALWPMGIPRLKFPREAPSRSTLKLEEAWHQFIPRSEWDKRLAPDMLAVDLGAAPGGWTWQLVNREMRVTAVDNGPMAENLMYSGLVDHQKVDGYQYRPRQRVDWMVCDIVEKPARTGALIETWIGEGLCREAVVNLKLPMKQRYAEVRKILQRLRESFDARGLKVAIGCKQLYHDREEVTCHLRRLER.

S-adenosyl-L-methionine is bound by residues Ser184, Ala217–Gly220, Asp236, Asp256, and Asp272. The active-site Proton acceptor is Lys301.

This sequence belongs to the class I-like SAM-binding methyltransferase superfamily. RNA methyltransferase RlmE family. RlmM subfamily. In terms of assembly, monomer.

It localises to the cytoplasm. The catalysed reaction is cytidine(2498) in 23S rRNA + S-adenosyl-L-methionine = 2'-O-methylcytidine(2498) in 23S rRNA + S-adenosyl-L-homocysteine + H(+). Its function is as follows. Catalyzes the 2'-O-methylation at nucleotide C2498 in 23S rRNA. The chain is Ribosomal RNA large subunit methyltransferase M from Pseudomonas aeruginosa (strain LESB58).